A 648-amino-acid polypeptide reads, in one-letter code: Probable potassium transport system protein Kup 1 (648 aa).

12 helical membrane passes run 25–45, 57–77, 113–133, 153–173, 184–204, 219–239, 263–283, 312–332, 362–382, 391–411, 417–437, and 446–466; these read LTLG…IYAF, IVAG…ILVV, LVMA…VITP, SVSR…LFLM, LFGP…LIHI, GVLF…AVFL, WLAI…AFAL, IPLV…VITG, IYLP…VLGF, AYGV…FLVV, WGWP…LFFF, and EGGW…VTWV.

Belongs to the HAK/KUP transporter (TC 2.A.72) family.

The protein resides in the cell inner membrane. It carries out the reaction K(+)(in) + H(+)(in) = K(+)(out) + H(+)(out). Transport of potassium into the cell. Likely operates as a K(+):H(+) symporter. In Rhizorhabdus wittichii (strain DSM 6014 / CCUG 31198 / JCM 15750 / NBRC 105917 / EY 4224 / RW1) (Sphingomonas wittichii), this protein is Probable potassium transport system protein Kup 1.